The following is a 409-amino-acid chain: Small ribosomal subunit protein mS47 (409 aa).

The N-terminal 26 residues, 1–26 (MQTVKALRRVSEPLQWVRSVSYGRRF), are a transit peptide targeting the mitochondrion. The tract at residues 388 to 409 (ASELDDSDSELKLPTAQREPYF) is disordered.

The protein belongs to the enoyl-CoA hydratase/isomerase family. Mitochondrion-specific ribosomal protein mS47 subfamily. Component of the mitochondrial ribosome small subunit.

It localises to the mitochondrion. This Arabidopsis thaliana (Mouse-ear cress) protein is Small ribosomal subunit protein mS47.